A 369-amino-acid polypeptide reads, in one-letter code: uncharacterized protein (369 aa).

A run of 9 helical transmembrane segments spans residues 25-45, 47-67, 119-139, 152-172, 206-226, 235-255, 268-288, 295-315, and 323-343; these read QWVI…TVHW, FGLL…LMPE, LNIV…FGVM, ITGF…FSAL, GALH…LFAI, LQAV…TLHL, LLFT…LPLI, LVGF…TTVF, and WVFY…GTVF.

It to B.subtilis ComEC.

The protein resides in the cell membrane. This is an uncharacterized protein from Mycoplasma pneumoniae (strain ATCC 29342 / M129 / Subtype 1) (Mycoplasmoides pneumoniae).